Consider the following 361-residue polypeptide: RLA class I histocompatibility antigen, alpha chain 11/11 (361 aa).

Positions 1–24 (MGSMAPRTLLLLLAGALTLKDTQA) are cleaved as a signal peptide. Residues 25-114 (GSHSMRYFYT…ALRYYNQSAA (90 aa)) form an alpha-1 region. Residues 25–308 (GSHSMRYFYT…EPPAQPTALI (284 aa)) are Extracellular-facing. N-linked (GlcNAc...) asparagine glycosylation is present at Asn-110. Residues 115–206 (GSHTFQTMFG…EMGKETLQRA (92 aa)) are alpha-2. Intrachain disulfides connect Cys-125–Cys-188 and Cys-227–Cys-283. The alpha-3 stretch occupies residues 207–298 (DPPKAHVTHH…GLPEPLTLTW (92 aa)). Residues 209–297 (PKAHVTHHPA…EGLPEPLTLT (89 aa)) enclose the Ig-like C1-type domain. Residues 299–308 (EPPAQPTALI) are connecting peptide. A helical membrane pass occupies residues 309–329 (VGIVAGVLGVLLILGAVVAVV). Residues 330 to 361 (RRKKHSSDGKGGRYTPAAGGHRDQGSDDSLMP) are Cytoplasmic-facing. A disordered region spans residues 335–361 (SSDGKGGRYTPAAGGHRDQGSDDSLMP). A phosphoserine mark is found at Ser-355 and Ser-358.

The protein belongs to the MHC class I family. In terms of assembly, heterodimer of an alpha chain and a beta chain (beta-2-microglobulin).

The protein localises to the membrane. Its function is as follows. Involved in the presentation of foreign antigens to the immune system. The sequence is that of RLA class I histocompatibility antigen, alpha chain 11/11 from Oryctolagus cuniculus (Rabbit).